Reading from the N-terminus, the 85-residue chain is Granaticin polyketide synthase acyl carrier protein (85 aa).

The Carrier domain occupies 3 to 81 (RLTLDGLRTI…VLLDLVNGAQ (79 aa)). Residue Ser-41 is modified to O-(pantetheine 4'-phosphoryl)serine.

4'-phosphopantetheine is transferred from CoA to a specific serine of the apo-ACP-like protein.

The protein operates within antibiotic biosynthesis; granaticin biosynthesis. In terms of biological role, acyl carrier protein. In Streptomyces violaceoruber, this protein is Granaticin polyketide synthase acyl carrier protein.